We begin with the raw amino-acid sequence, 282 residues long: tRNA (guanine-N(1)-)-methyltransferase (282 aa).

S-adenosyl-L-methionine is bound by residues G157 and 177 to 182; that span reads VGDYIL.

This sequence belongs to the RNA methyltransferase TrmD family. In terms of assembly, homodimer.

It is found in the cytoplasm. The enzyme catalyses guanosine(37) in tRNA + S-adenosyl-L-methionine = N(1)-methylguanosine(37) in tRNA + S-adenosyl-L-homocysteine + H(+). Its function is as follows. Specifically methylates guanosine-37 in various tRNAs. This Rickettsia bellii (strain RML369-C) protein is tRNA (guanine-N(1)-)-methyltransferase.